Consider the following 130-residue polypeptide: Phosphoribosyl-AMP cyclohydrolase (130 aa).

Asp-77 lines the Mg(2+) pocket. Zn(2+) is bound at residue Cys-78. Asp-79 and Asp-81 together coordinate Mg(2+). Zn(2+) is bound by residues Cys-95 and Cys-102.

Belongs to the PRA-CH family. As to quaternary structure, homodimer. Mg(2+) serves as cofactor. Requires Zn(2+) as cofactor.

It is found in the cytoplasm. The catalysed reaction is 1-(5-phospho-beta-D-ribosyl)-5'-AMP + H2O = 1-(5-phospho-beta-D-ribosyl)-5-[(5-phospho-beta-D-ribosylamino)methylideneamino]imidazole-4-carboxamide. The protein operates within amino-acid biosynthesis; L-histidine biosynthesis; L-histidine from 5-phospho-alpha-D-ribose 1-diphosphate: step 3/9. Catalyzes the hydrolysis of the adenine ring of phosphoribosyl-AMP. The chain is Phosphoribosyl-AMP cyclohydrolase from Pseudomonas syringae pv. syringae (strain B728a).